The following is a 3907-amino-acid chain: Cyclo-acetoacetyl-L-tryptophan synthase (3907 aa).

The region spanning 2–436 is the Ketosynthase family 3 (KS3) domain; that stretch reads KTPIAVVGTA…GTNAHAIIES (435 aa). Active-site for beta-ketoacyl synthase activity residues include cysteine 176, histidine 313, and histidine 356. The segment at 555 to 870 is malonyl-CoA:ACP transacylase (MAT) domain; that stretch reads IFTGQGAQWA…SLLRRGQNDL (316 aa). The tract at residues 937 to 1074 is N-terminal hotdog fold; the sequence is HPLLGRRSAD…ARLTLHLGDA (138 aa). Residues 937–1236 form a dehydratase (DH) domain region; that stretch reads HPLLGRRSAD…GLVMKSVPQP (300 aa). In terms of domain architecture, PKS/mFAS DH spans 937-1239; it reads HPLLGRRSAD…MKSVPQPDTS (303 aa). Residues 1092 to 1239 are C-terminal hotdog fold; sequence LAPVDVADLY…MKSVPQPDTS (148 aa). The interval 1386-1573 is methyltransferase (MT) domain; the sequence is AAMFSQLSKD…FSGIDHIFHD (188 aa). The segment at 2064 to 2238 is ketoreductase (KR)domain; that stretch reads GTYFMIDMAT…VGSVMALGMV (175 aa). The interval 2324–2352 is disordered; it reads TKEGQYAEQEDSPSLLVPDEQLQESGPGR. The region spanning 2356–2430 is the Carrier 1 domain; the sequence is DDLLARLSGK…LCEKAVPKPN (75 aa). Serine 2390 is modified (O-(pantetheine 4'-phosphoryl)serine). The condensation stretch occupies residues 2504 to 2926; it reads MSPHQSQIWF…SSNPLISVQS (423 aa). The adenylation stretch occupies residues 2959–3359; sequence FQDMVDQYGD…GSLILLGRMD (401 aa). Residues 3474 to 3549 form the Carrier 2 domain; the sequence is KRLTLGEGEL…QMALKVDARK (76 aa). Position 3509 is an O-(pantetheine 4'-phosphoryl)serine (serine 3509). The segment at 3594-3813 is reductase (RED) domain; sequence LTGSTSFLGR…DFQKVEIIAE (220 aa).

In the C-terminal section; belongs to the NRP synthetase family.

It carries out the reaction L-tryptophan + malonyl-CoA + acetyl-CoA = cyclo-acetoacetyl-L-tryptophan + CO2 + 2 CoA + H2O. It functions in the pathway secondary metabolite biosynthesis. In terms of biological role, hybrid PKS-NRPS synthetase; part of the gene cluster that mediates the biosynthesis of the fungal neurotoxin cyclopiazonic acid (CPA), a nanomolar inhibitor of Ca(2+)-ATPase with a unique pentacyclic indole tetramic acid scaffold. The hybrid two module polyketide synthase-nonribosomal peptide synthetase (PKS-NRPS) cpaS incorporates acetyl-CoA, malonyl-CoA, and tryptophan (Trp) and utilizes a C-terminal redox-incompetent reductase domain to make and release the tryptophan tetramic acid, cyclo-acetoacetyl-L-tryptophan (c-AATrp), as the first intermediate in the pathway. CpaS catalyzes a Dieckmann-type cyclization on the N-acetoacetyl-Trp intermediate bound in thioester linkage to the phosphopantetheinyl arm of the T domain to form and release c-AATrp. CpaD then regiospecifically dimethylallylates c-AATrp to form beta-cyclopiazonic acid. CpaD discriminates against free Trp but accepts tryptophan-containing thiohydantoins, diketopiperazines, and linear peptides as substrates for C4-prenylation and also acts as regiospecific O-dimethylallyltransferase (DMAT) on a tyrosine-derived tetramic acid. The beta-cyclopiazonate dehydrogenase cpaO then carries out the dehydrogenation of beta-CPA to yield an unstable enimine product, which is captured by intramolecular cyclization to create the pentacyclic fused scaffold of alpha-cyclopiazonate. Finally, the cytochrome P450 monooxygenase cpaH mediates the conversion of CPA into the less toxic 2-oxocyclopiazonic acid, the end product of the CPA pathway in A.oryza. This Aspergillus oryzae (Yellow koji mold) protein is Cyclo-acetoacetyl-L-tryptophan synthase.